The chain runs to 528 residues: Linear primary-alkylsulfatase (528 aa).

Residues His42, His44, Asp46, His47, Glu151, and Glu170 each coordinate Zn(2+). Sulfate-binding positions include Asn179 to Arg184 and Arg189. His213 is a Zn(2+) binding site. Sulfate is bound at residue Tyr275.

The protein belongs to the metallo-beta-lactamase superfamily. Type III sulfatase family. It depends on Zn(2+) as a cofactor.

It carries out the reaction a primary linear alkyl sulfate ester + H2O = a primary alcohol + sulfate + H(+). In terms of biological role, alkylsulfatase that cleaves the widely used detergent sodium dodecyl sulfate (SDS), which allows the bacterium to use SDS as a sole carbon or sulfur source. The protein is Linear primary-alkylsulfatase of Pseudomonas sp. (strain ATCC 19151).